Consider the following 559-residue polypeptide: Proton-coupled zinc antiporter SLC30A9, mitochondrial (559 aa).

The tract at residues serine 58–proline 96 is disordered. Transmembrane regions (helical) follow at residues valine 230 to valine 250, glycine 305 to leucine 325, leucine 333 to valine 353, alanine 389 to glycine 409, and serine 415 to threonine 435. An LXXLL motif motif is present at residues leucine 453–leucine 457.

The protein belongs to the cation diffusion facilitator (CDF) transporter (TC 2.A.4) family. SLC30A subfamily.

The protein resides in the mitochondrion membrane. It localises to the nucleus. The protein localises to the endoplasmic reticulum. The enzyme catalyses Zn(2+)(in) + 2 H(+)(out) = Zn(2+)(out) + 2 H(+)(in). In terms of biological role, mitochondrial proton-coupled zinc ion antiporter mediating the export of zinc from the mitochondria and involved in zinc homeostasis, zinc mobilization as well as mitochondrial morphology and health. In nucleus, may function as a secondary coactivator for nuclear receptors. The sequence is that of Proton-coupled zinc antiporter SLC30A9, mitochondrial (slc30a9) from Xenopus laevis (African clawed frog).